The primary structure comprises 74 residues: Major structural pilin EpdE (74 aa).

A propeptide spanning residues 1 to 12 (MKFLEKLTSKKG) is cleaved from the precursor. Residue Q13 is modified to Pyrrolidone carboxylic acid. The short motif at 13 to 21 (QIAMELGIL) is the QXSXEXXXL element.

In terms of processing, the N-terminus is cleaved by the prepilin peptidase EppA, which recognizes the class III signal sequence. Post-translationally, N-glycosylated. Glycosylated with an N-linked branched pentasaccharide glycan. May contain glycans at three sites. Glycosylation is AglB-dependent. The N-glycosylation does not occur unless the signal peptide has been cleaved first.

It is found in the secreted. It localises to the cell surface. Its subcellular location is the fimbrium. Functionally, major component of the type IV-like pili. The polypeptide is Major structural pilin EpdE (Methanococcus maripaludis (strain DSM 14266 / JCM 13030 / NBRC 101832 / S2 / LL)).